Consider the following 140-residue polypeptide: Nucleoside diphosphate kinase (140 aa).

Residues Lys11, Phe59, Arg87, Thr93, Arg104, and Asn114 each contribute to the ATP site. His117 functions as the Pros-phosphohistidine intermediate in the catalytic mechanism.

Belongs to the NDK family. In terms of assembly, homotetramer. It depends on Mg(2+) as a cofactor.

It is found in the cytoplasm. It carries out the reaction a 2'-deoxyribonucleoside 5'-diphosphate + ATP = a 2'-deoxyribonucleoside 5'-triphosphate + ADP. It catalyses the reaction a ribonucleoside 5'-diphosphate + ATP = a ribonucleoside 5'-triphosphate + ADP. Functionally, major role in the synthesis of nucleoside triphosphates other than ATP. The ATP gamma phosphate is transferred to the NDP beta phosphate via a ping-pong mechanism, using a phosphorylated active-site intermediate. The chain is Nucleoside diphosphate kinase from Brucella melitensis biotype 1 (strain ATCC 23456 / CCUG 17765 / NCTC 10094 / 16M).